The chain runs to 267 residues: uncharacterized protein (267 aa).

Residues Ser-210 and Ser-224 each carry the phosphoserine modification.

As to expression, testis. Down-regulated in men with spermatocyte arrest.

In terms of biological role, essential for normal spermatogenesis and male fertility. This is an uncharacterized protein from Homo sapiens (Human).